The chain runs to 873 residues: MASLDLPYRCPRCGEHKRFRSLSSLRAHLEYSHTYETLYILSKTNSICDGAAAAAAAAAAASGFPLAPEPAALLAVPGARREVFESTSFQGKEQATGPSPAGPHLLHHHHHHAPLAHFPADLVPASLPCEELAEPGLVPAARYALREIEIPLGELFARKSVASSACSTPPPGPGPGPCSGPSSASPASPSPADVAYEEGLARLKIRALEKLEVDRRLERLSEEVEQKIAGQVGRLQAELERKAAELETARQESARLGREKEELEERASELSRQVDVSVELLASLKQDLVHKEQELSRKQQEVVQIDQFLKETAAREASAKLRLQQFIEELLERADRAERQLQVISSSCGSTPSASLGRGGGGSASGPGVRGPGRMREHHAGSAVPSTYAVSRHGSSPSTGASSRVPAASQSSGCYDSDSLELPRPEEGPSEDSGPGGLGSRAQATNGGSERSQAPRSSGLRRQAIQNWQRRPRRHSTEGEEGDVSDVGSRTTESEAEGPSDVPRPGPAVAGPLNSCRLSARPEGGSGRGRRVERGSPSRSNEVISPEILKMRAALFCIFTYLDTRTLLHAAEVCRDWRFVARHPAVWTRVLLENARVCSKFLAMLAQWCTQAHSLTLQNLKPRQRGKKESKEEYARSTRGCLEAGLESLLKAAGGNLLILRISHCPNILTDRSLWLASCYCRALQAVTYRSATDPVGHEVIWALGAGCRDIVSLQVAPLHPCQQPTRFSNRCLQMIGRCWPHLRALGVGGAGCGVQGLASLARNCMRLQVLELDHVSEITQEVAAEVCREGLKGLEMLVLTATPVTPKALLHFNSICRNLKSIVVQIGIADYFKEPSSPEAQKLFEDMVTKLQALRRRPGFSKILHIKVEGGC.

Over residues glutamate 85–glycine 97 the composition is skewed to polar residues. Disordered regions lie at residues glutamate 85–histidine 110, serine 163–aspartate 193, and serine 345–serine 540. A compositionally biased stretch (pro residues) spans threonine 168–cysteine 178. Positions serine 179 to alanine 192 are enriched in low complexity. Residues alanine 207–glycine 349 are a coiled coil. A compositionally biased stretch (gly residues) spans glycine 357 to glycine 371. Arginine 358 bears the Omega-N-methylarginine mark. Polar residues-rich tracts occupy residues valine 384 to cysteine 414 and alanine 442 to arginine 456. Position 476 is a phosphoserine (serine 476). Position 477 is a phosphothreonine (threonine 477). The 45-residue stretch at isoleucine 548 to leucine 592 folds into the F-box domain. Phosphoserine is present on serine 760.

Directly interacts with SKP1 and CUL1.

Its function is as follows. Substrate-recognition component of the SCF (SKP1-CUL1-F-box protein)-type E3 ubiquitin ligase complex. The sequence is that of F-box only protein 41 (Fbxo41) from Mus musculus (Mouse).